Consider the following 739-residue polypeptide: Catalase-peroxidase (739 aa).

The tryptophyl-tyrosyl-methioninium (Trp-Tyr) (with M-253) cross-link spans 99–227; the sequence is WHSAGTYRMG…LAAVQMGLIY (129 aa). His100 acts as the Proton acceptor in catalysis. Positions 227-253 form a cross-link, tryptophyl-tyrosyl-methioninium (Tyr-Met) (with W-99); it reads YVNPEGPDGNPDPVASGRDVRETFARM. His268 provides a ligand contact to heme b.

This sequence belongs to the peroxidase family. Peroxidase/catalase subfamily. As to quaternary structure, homodimer or homotetramer. The cofactor is heme b. Formation of the three residue Trp-Tyr-Met cross-link is important for the catalase, but not the peroxidase activity of the enzyme.

The catalysed reaction is H2O2 + AH2 = A + 2 H2O. The enzyme catalyses 2 H2O2 = O2 + 2 H2O. Bifunctional enzyme with both catalase and broad-spectrum peroxidase activity. The polypeptide is Catalase-peroxidase (Syntrophotalea carbinolica (strain DSM 2380 / NBRC 103641 / GraBd1) (Pelobacter carbinolicus)).